Consider the following 227-residue polypeptide: Ribose-5-phosphate isomerase A (227 aa).

Residues Thr-26 to Thr-29, Asp-82 to Asp-85, and Lys-95 to Gly-98 contribute to the substrate site. Residue Glu-104 is the Proton acceptor of the active site. Lys-122 is a binding site for substrate.

Belongs to the ribose 5-phosphate isomerase family. In terms of assembly, homodimer.

It carries out the reaction aldehydo-D-ribose 5-phosphate = D-ribulose 5-phosphate. Its pathway is carbohydrate degradation; pentose phosphate pathway; D-ribose 5-phosphate from D-ribulose 5-phosphate (non-oxidative stage): step 1/1. Its function is as follows. Catalyzes the reversible conversion of ribose-5-phosphate to ribulose 5-phosphate. This is Ribose-5-phosphate isomerase A from Streptococcus pyogenes serotype M28 (strain MGAS6180).